The following is a 431-amino-acid chain: MANSC domain-containing protein 1 (431 aa).

An N-terminal signal peptide occupies residues 1–26 (MFFGGEGSLTYTLVIICFLTLRLSAS). The Extracellular portion of the chain corresponds to 27–385 (QNCLKKSLED…QYGLPFEKWL (359 aa)). The region spanning 33–117 (SLEDVVIDIQ…LKPAKGLMSY (85 aa)) is the MANSC domain. Asparagine 72, asparagine 222, and asparagine 251 each carry an N-linked (GlcNAc...) asparagine glycan. The segment at 234–277 (SPHTTSATPKPATLLPTNASVTPSGTSQPQLATTAPPVTTVTSQ) is disordered. The segment covering 248–261 (LPTNASVTPSGTSQ) has biased composition (polar residues). Low complexity predominate over residues 262 to 277 (PQLATTAPPVTTVTSQ). 2 N-linked (GlcNAc...) asparagine glycosylation sites follow: asparagine 327 and asparagine 352. Positions 352-372 (NKTASWEGREASPGSSSQGSV) are disordered. A helical membrane pass occupies residues 386-408 (LIGSLLFGVLFLVIGLVLLGRIL). Over 409-431 (SESLRRKRYSRLDYLINGIYVDI) the chain is Cytoplasmic.

In terms of tissue distribution, widely expressed.

Its subcellular location is the membrane. The sequence is that of MANSC domain-containing protein 1 (MANSC1) from Homo sapiens (Human).